Here is a 507-residue protein sequence, read N- to C-terminus: Histidine ammonia-lyase (507 aa).

The segment at residues 143-145 (SSG) is a cross-link (5-imidazolinone (Ser-Gly)). Serine 144 carries the 2,3-didehydroalanine (Ser) modification.

The protein belongs to the PAL/histidase family. Post-translationally, contains an active site 4-methylidene-imidazol-5-one (MIO), which is formed autocatalytically by cyclization and dehydration of residues Ser-Ser-Gly.

The protein localises to the cytoplasm. It catalyses the reaction L-histidine = trans-urocanate + NH4(+). It functions in the pathway amino-acid degradation; L-histidine degradation into L-glutamate; N-formimidoyl-L-glutamate from L-histidine: step 1/3. The protein is Histidine ammonia-lyase of Alkaliphilus metalliredigens (strain QYMF).